The following is a 427-amino-acid chain: Serine--tRNA ligase (427 aa).

L-serine is bound at residue 231–233 (TAE). Position 262-264 (262-264 (RSE)) interacts with ATP. Glu-285 contributes to the L-serine binding site. 349–352 (EISS) is a binding site for ATP. Ser-385 serves as a coordination point for L-serine.

This sequence belongs to the class-II aminoacyl-tRNA synthetase family. Type-1 seryl-tRNA synthetase subfamily. As to quaternary structure, homodimer. The tRNA molecule binds across the dimer.

It localises to the cytoplasm. The enzyme catalyses tRNA(Ser) + L-serine + ATP = L-seryl-tRNA(Ser) + AMP + diphosphate + H(+). The catalysed reaction is tRNA(Sec) + L-serine + ATP = L-seryl-tRNA(Sec) + AMP + diphosphate + H(+). The protein operates within aminoacyl-tRNA biosynthesis; selenocysteinyl-tRNA(Sec) biosynthesis; L-seryl-tRNA(Sec) from L-serine and tRNA(Sec): step 1/1. Its function is as follows. Catalyzes the attachment of serine to tRNA(Ser). Is also able to aminoacylate tRNA(Sec) with serine, to form the misacylated tRNA L-seryl-tRNA(Sec), which will be further converted into selenocysteinyl-tRNA(Sec). The protein is Serine--tRNA ligase of Rhizobium johnstonii (strain DSM 114642 / LMG 32736 / 3841) (Rhizobium leguminosarum bv. viciae).